An 809-amino-acid chain; its full sequence is Trimethylamine-N-oxide reductase 2 (809 aa).

A signal peptide (tat-type signal) is located at residues 1 to 31; the sequence is MTLTRREFIKHSGIAAGTLVVTSAAPLPAWA. Ser176 serves as a coordination point for Mo-bis(molybdopterin guanine dinucleotide).

It belongs to the prokaryotic molybdopterin-containing oxidoreductase family. The cofactor is Mo-bis(molybdopterin guanine dinucleotide). In terms of processing, predicted to be exported by the Tat system. The position of the signal peptide cleavage has not been experimentally proven.

The protein localises to the periplasm. The catalysed reaction is trimethylamine + 2 Fe(III)-[cytochrome c] + H2O = trimethylamine N-oxide + 2 Fe(II)-[cytochrome c] + 3 H(+). Reduces trimethylamine-N-oxide (TMAO) into trimethylamine; an anaerobic reaction coupled to energy-yielding reactions. Can also reduce other N- and S-oxide compounds such as 4-methylmorpholine-N-oxide and biotin sulfoxide (BSO), but with a lower catalytic efficiency. This is Trimethylamine-N-oxide reductase 2 (torZ) from Escherichia coli O6:H1 (strain CFT073 / ATCC 700928 / UPEC).